Reading from the N-terminus, the 93-residue chain is MARSLKKGPFADPHLLKKIEAQADSEKKSVIKTWSRRSTIFPSFIGFTIAVYDGRKHVPVFVQEDMVGHKLGEFVPTRTFKGHKADDKKTGKK.

This sequence belongs to the universal ribosomal protein uS19 family.

Its function is as follows. Protein S19 forms a complex with S13 that binds strongly to the 16S ribosomal RNA. In Leuconostoc citreum (strain KM20), this protein is Small ribosomal subunit protein uS19.